The chain runs to 180 residues: Probable DNA replication complex GINS protein PSF2 (180 aa).

The protein belongs to the GINS2/PSF2 family. In terms of assembly, component of the GINS complex which is a heterotetramer of gins1, gins2, gins3 and gins4.

It is found in the nucleus. Its function is as follows. Required for correct functioning of the GINS complex, a complex that plays an essential role in the initiation of DNA replication, and progression of DNA replication forks. GINS complex is a core component of CDC45-MCM-GINS (CMG) helicase, the molecular machine that unwinds template DNA during replication, and around which the replisome is built. The protein is Probable DNA replication complex GINS protein PSF2 (psf-2) of Caenorhabditis elegans.